We begin with the raw amino-acid sequence, 779 residues long: Phosphoribosylformylglycinamidine synthase subunit PurL (779 aa).

His-52 is a catalytic residue. 2 residues coordinate ATP: Tyr-55 and Lys-94. Residue Glu-96 participates in Mg(2+) binding. Residues 97–100 and Arg-119 contribute to the substrate site; that span reads SHNH. Catalysis depends on His-98, which acts as the Proton acceptor. Asp-120 provides a ligand contact to Mg(2+). Substrate is bound at residue Gln-243. Asp-271 is a Mg(2+) binding site. A substrate-binding site is contributed by 315-317; the sequence is ESQ. ATP is bound by residues Asn-523 and Gly-560. Mg(2+) is bound at residue Asn-561. Ser-563 is a substrate binding site.

Belongs to the FGAMS family. As to quaternary structure, monomer. Part of the FGAM synthase complex composed of 1 PurL, 1 PurQ and 2 PurS subunits.

It localises to the cytoplasm. It catalyses the reaction N(2)-formyl-N(1)-(5-phospho-beta-D-ribosyl)glycinamide + L-glutamine + ATP + H2O = 2-formamido-N(1)-(5-O-phospho-beta-D-ribosyl)acetamidine + L-glutamate + ADP + phosphate + H(+). It functions in the pathway purine metabolism; IMP biosynthesis via de novo pathway; 5-amino-1-(5-phospho-D-ribosyl)imidazole from N(2)-formyl-N(1)-(5-phospho-D-ribosyl)glycinamide: step 1/2. Its function is as follows. Part of the phosphoribosylformylglycinamidine synthase complex involved in the purines biosynthetic pathway. Catalyzes the ATP-dependent conversion of formylglycinamide ribonucleotide (FGAR) and glutamine to yield formylglycinamidine ribonucleotide (FGAM) and glutamate. The FGAM synthase complex is composed of three subunits. PurQ produces an ammonia molecule by converting glutamine to glutamate. PurL transfers the ammonia molecule to FGAR to form FGAM in an ATP-dependent manner. PurS interacts with PurQ and PurL and is thought to assist in the transfer of the ammonia molecule from PurQ to PurL. This is Phosphoribosylformylglycinamidine synthase subunit PurL from Prochlorococcus marinus (strain MIT 9301).